The following is an 86-amino-acid chain: Small ribosomal subunit protein uS15 (86 aa).

It belongs to the universal ribosomal protein uS15 family. In terms of assembly, part of the 30S ribosomal subunit. Forms a bridge to the 50S subunit in the 70S ribosome, contacting the 23S rRNA.

Its function is as follows. One of the primary rRNA binding proteins, it binds directly to 16S rRNA where it helps nucleate assembly of the platform of the 30S subunit by binding and bridging several RNA helices of the 16S rRNA. Forms an intersubunit bridge (bridge B4) with the 23S rRNA of the 50S subunit in the ribosome. This Mycoplasma genitalium (strain ATCC 33530 / DSM 19775 / NCTC 10195 / G37) (Mycoplasmoides genitalium) protein is Small ribosomal subunit protein uS15.